Reading from the N-terminus, the 4471-residue chain is Dynein axonemal heavy chain 10 (4471 aa).

The segment at 1-1793 (MVPEEVEVEI…NIRQCTGTFG (1793 aa)) is stem. A disordered region spans residues 46-65 (TESLGQPLNREDEEMDKEIS). Coiled-coil stretches lie at residues 203 to 223 (NVQK…GEIK), 602 to 622 (QEVK…EDRK), 1071 to 1106 (KLLN…EDLK), and 1217 to 1245 (VELL…KLFD). Asparagine 1074 is a glycosylation site (N-linked (GlcNAc...) asparagine). Residues 1221–1254 (GVYERELARHEKSRQELANAEKLFDLPITMYPEL) form a TPR 1 repeat. AAA regions lie at residues 1794-2015 (YGYE…VLVM), 2075-2294 (DAVE…VIVE), 2417-2665 (IHAP…VFNG), and 2765-3014 (EYNE…LRRS). The short motif at 1832–1839 (GPAGTGKT) is the GPAGTGKT motif element. ATP is bound at residue 1832-1839 (GPAGTGKT). The CFDEFNR motif signature appears at 1882–1888 (CFDEFNR). ATP-binding positions include 2113-2120 (GPTRGGKS) and 2455-2462 (GESGTSKT). TPR repeat units lie at residues 2736–2769 (MALH…YNES) and 2771–2797 (TKMN…MDRG). The stretch at 2747-2770 (EDIQDYEAAKALFQEILEEYNESN) forms a coiled coil. 2803–2810 (GVGGSGKQ) serves as a coordination point for ATP. The tract at residues 3029-3313 (YSKLLDEKTQ…QKLQEEAEIM (285 aa)) is stalk. Coiled coils occupy residues 3045 to 3131 (KRLD…LAEV), 3257 to 3327 (KREK…ISGL), and 3567 to 3638 (ERRE…EKTA). Residues 3399–3629 (LTDDVEISRW…TKSKATEVSE (231 aa)) form an AAA 5 region. A TPR 4 repeat occupies 3802–3837 (WQEWYDLDSLEQFPVPLGYDNNITPFQKLLILRCFR). The AAA 6 stretch occupies residues 3845 to 4062 (VTDYVTVTMG…FQVCMEILNT (218 aa)). One copy of the TPR 5 repeat lies at 4074–4108 (RIPWGSLKYLIGEVMYGGRAIDSFDRRILTIYMDE). The stretch at 4235-4260 (LLQELERFNKLVVRMTKSLAELQRAL) forms a coiled coil.

It belongs to the dynein heavy chain family. In terms of assembly, consists of at least two heavy chains and a number of intermediate and light chains. Expressed primarily in trachea and testis, 2 tissues containing axonemal structures. Also expressed in brain but not in adult heart.

It localises to the cytoplasm. The protein localises to the cytoskeleton. Its subcellular location is the cilium axoneme. In terms of biological role, force generating protein of respiratory cilia. Produces force towards the minus ends of microtubules. Dynein has ATPase activity; the force-producing power stroke is thought to occur on release of ADP. Involved in sperm motility; implicated in sperm flagellar assembly. Probable inner arm dynein heavy chain. This chain is Dynein axonemal heavy chain 10 (DNAH10), found in Homo sapiens (Human).